The primary structure comprises 439 residues: Leukocyte immunoglobulin-like receptor subfamily A member 3 (439 aa).

Positions 1–23 (MTPILTVLICLGLSLDPRTHVQA) are cleaved as a signal peptide. 4 Ig-like C2-type domains span residues 27–108 (PKPT…AGLS), 119–224 (TGAY…GVSK), 226–315 (PSLS…DPLD), and 326–415 (PFLS…SDPL). A disulfide bridge links C49 with C98. The N-linked (GlcNAc...) asparagine glycan is linked to N140. Disulfide bonds link C145–C197, C157–C167, and C246–C297. N-linked (GlcNAc...) asparagine glycosylation is found at N281, N302, and N341. The cysteines at positions 346 and 397 are disulfide-linked. N-linked (GlcNAc...) asparagine glycosylation is present at N431.

N-glycosylation is required for ligand binding. In terms of tissue distribution, detected in B-cells, and at lower levels in natural killer (NK) cells. Detected in peripheral blood monocytes and lung.

The protein resides in the secreted. Its function is as follows. Acts as a soluble receptor for class I MHC antigens. Binds both classical and non-classical HLA class I molecules but with reduced affinities compared to LILRB1 or LILRB2. Binds with high affinity to the surface of monocytes, leading to abolish LPS-induced TNF-alpha production by monocytes. In Homo sapiens (Human), this protein is Leukocyte immunoglobulin-like receptor subfamily A member 3 (LILRA3).